We begin with the raw amino-acid sequence, 81 residues long: Exodeoxyribonuclease 7 small subunit (81 aa).

The protein belongs to the XseB family. Heterooligomer composed of large and small subunits.

Its subcellular location is the cytoplasm. It catalyses the reaction Exonucleolytic cleavage in either 5'- to 3'- or 3'- to 5'-direction to yield nucleoside 5'-phosphates.. In terms of biological role, bidirectionally degrades single-stranded DNA into large acid-insoluble oligonucleotides, which are then degraded further into small acid-soluble oligonucleotides. The polypeptide is Exodeoxyribonuclease 7 small subunit (Nitratidesulfovibrio vulgaris (strain ATCC 29579 / DSM 644 / CCUG 34227 / NCIMB 8303 / VKM B-1760 / Hildenborough) (Desulfovibrio vulgaris)).